Consider the following 181-residue polypeptide: Dual-action ribosomal maturation protein DarP (181 aa).

The protein belongs to the DarP family.

The protein resides in the cytoplasm. Functionally, member of a network of 50S ribosomal subunit biogenesis factors which assembles along the 30S-50S interface, preventing incorrect 23S rRNA structures from forming. Promotes peptidyl transferase center (PTC) maturation. In Actinobacillus succinogenes (strain ATCC 55618 / DSM 22257 / CCUG 43843 / 130Z), this protein is Dual-action ribosomal maturation protein DarP.